The following is an 81-amino-acid chain: Elicitor peptide 4 (81 aa).

Positions 1-54 are excised as a propeptide; the sequence is MERGVSYYLWIPFKFIHQTFGSLLLKLLGLRSPSDHSFPEDGEEEVKVVEVSSR. The disordered stretch occupies residues 57-81; it reads PGKKNVLKKSRESSGKPGGTNKKPF.

Belongs to the brassicaceae elicitor peptide family.

Elicitor of plant defense. This chain is Elicitor peptide 4 (PEP4), found in Arabidopsis thaliana (Mouse-ear cress).